The sequence spans 333 residues: DNA-directed RNA polymerase subunit alpha (333 aa).

Residues 1–233 form an alpha N-terminal domain (alpha-NTD) region; it reads MVREKVKVST…NLFIPFLHVE (233 aa). The tract at residues 267–333 is alpha C-terminal domain (alpha-CTD); the sequence is LVFQYIFIDQ…LEKNRKFISN (67 aa).

The protein belongs to the RNA polymerase alpha chain family. In plastids the minimal PEP RNA polymerase catalytic core is composed of four subunits: alpha, beta, beta', and beta''. When a (nuclear-encoded) sigma factor is associated with the core the holoenzyme is formed, which can initiate transcription.

Its subcellular location is the plastid. It localises to the chloroplast. It catalyses the reaction RNA(n) + a ribonucleoside 5'-triphosphate = RNA(n+1) + diphosphate. Its function is as follows. DNA-dependent RNA polymerase catalyzes the transcription of DNA into RNA using the four ribonucleoside triphosphates as substrates. In Aethionema grandiflorum (Persian stone-cress), this protein is DNA-directed RNA polymerase subunit alpha.